Consider the following 469-residue polypeptide: L-seryl-tRNA(Sec) selenium transferase (469 aa).

Position 295 is an N6-(pyridoxal phosphate)lysine (Lys-295).

The protein belongs to the SelA family. Pyridoxal 5'-phosphate serves as cofactor.

It is found in the cytoplasm. It carries out the reaction L-seryl-tRNA(Sec) + selenophosphate + H(+) = L-selenocysteinyl-tRNA(Sec) + phosphate. Its pathway is aminoacyl-tRNA biosynthesis; selenocysteinyl-tRNA(Sec) biosynthesis; selenocysteinyl-tRNA(Sec) from L-seryl-tRNA(Sec) (bacterial route): step 1/1. In terms of biological role, converts seryl-tRNA(Sec) to selenocysteinyl-tRNA(Sec) required for selenoprotein biosynthesis. The protein is L-seryl-tRNA(Sec) selenium transferase of Methylocella silvestris (strain DSM 15510 / CIP 108128 / LMG 27833 / NCIMB 13906 / BL2).